A 416-amino-acid polypeptide reads, in one-letter code: 4-hydroxy-3-methylbut-2-en-1-yl diphosphate synthase (flavodoxin) (416 aa).

Residues Cys304, Cys307, Cys350, and Glu357 each coordinate [4Fe-4S] cluster.

This sequence belongs to the IspG family. [4Fe-4S] cluster is required as a cofactor.

The enzyme catalyses (2E)-4-hydroxy-3-methylbut-2-enyl diphosphate + oxidized [flavodoxin] + H2O + 2 H(+) = 2-C-methyl-D-erythritol 2,4-cyclic diphosphate + reduced [flavodoxin]. It functions in the pathway isoprenoid biosynthesis; isopentenyl diphosphate biosynthesis via DXP pathway; isopentenyl diphosphate from 1-deoxy-D-xylulose 5-phosphate: step 5/6. Its function is as follows. Converts 2C-methyl-D-erythritol 2,4-cyclodiphosphate (ME-2,4cPP) into 1-hydroxy-2-methyl-2-(E)-butenyl 4-diphosphate. The sequence is that of 4-hydroxy-3-methylbut-2-en-1-yl diphosphate synthase (flavodoxin) from Rhizobium johnstonii (strain DSM 114642 / LMG 32736 / 3841) (Rhizobium leguminosarum bv. viciae).